Consider the following 173-residue polypeptide: UPF0598 protein F59C6.12 (173 aa).

The protein belongs to the UPF0598 family.

The protein is UPF0598 protein F59C6.12 of Caenorhabditis elegans.